The following is a 364-amino-acid chain: Fructose-bisphosphate aldolase B (364 aa).

Residue Ala-2 is modified to N-acetylalanine. Position 13 is an N6-succinyllysine (Lys-13). Ser-36 carries the post-translational modification Phosphoserine. At Thr-39 the chain carries Phosphothreonine. A beta-D-fructose 1,6-bisphosphate-binding site is contributed by Arg-43. Ser-89 carries the phosphoserine modification. Thr-119 bears the Phosphothreonine mark. Lys-121 carries the post-translational modification N6-succinyllysine. Position 132 is a phosphoserine (Ser-132). Glu-188 acts as the Proton acceptor in catalysis. Position 206 is a phosphoserine (Ser-206). Catalysis depends on Lys-230, which acts as the Schiff-base intermediate with dihydroxyacetone-P. Phosphoserine is present on residues Ser-272, Ser-276, Ser-299, and Ser-301. Position 272 to 274 (272 to 274) interacts with beta-D-fructose 1,6-bisphosphate; sequence SGG. Arg-304 is a beta-D-fructose 1,6-bisphosphate binding site. Position 309 is a phosphoserine (Ser-309). At Lys-317 the chain carries N6-succinyllysine.

The protein belongs to the class I fructose-bisphosphate aldolase family. In terms of assembly, homotetramer. Interacts with BBS1, BBS2, BBS4 and BBS7. Forms a ternary complex with G6PD and TP53; this interaction is direct.

The protein localises to the cytoplasm. It is found in the cytosol. Its subcellular location is the cytoskeleton. The protein resides in the microtubule organizing center. It localises to the centrosome. The protein localises to the centriolar satellite. The catalysed reaction is beta-D-fructose 1,6-bisphosphate = D-glyceraldehyde 3-phosphate + dihydroxyacetone phosphate. The enzyme catalyses beta-D-fructose 1-phosphate = D-glyceraldehyde + dihydroxyacetone phosphate. The protein operates within carbohydrate degradation; glycolysis; D-glyceraldehyde 3-phosphate and glycerone phosphate from D-glucose: step 4/4. It participates in carbohydrate biosynthesis; gluconeogenesis. Its pathway is carbohydrate metabolism; fructose metabolism. Functionally, catalyzes the aldol cleavage of fructose 1,6-biphosphate to form two triosephosphates dihydroxyacetone phosphate and D-glyceraldehyde 3-phosphate in glycolysis as well as the reverse stereospecific aldol addition reaction in gluconeogenesis. In fructolysis, metabolizes fructose 1-phosphate derived from the phosphorylation of dietary fructose by fructokinase into dihydroxyacetone phosphate and D-glyceraldehyde. Acts as an adapter independently of its enzymatic activity, exerts a tumor suppressor role by stabilizing the ternary complex with G6PD and TP53 to inhibit G6PD activity and keep oxidative pentose phosphate metabolism in check. This Mus musculus (Mouse) protein is Fructose-bisphosphate aldolase B.